Consider the following 158-residue polypeptide: NADH-quinone oxidoreductase subunit B 2 (158 aa).

Cys-37, Cys-38, Cys-102, and Cys-132 together coordinate [4Fe-4S] cluster.

This sequence belongs to the complex I 20 kDa subunit family. NDH-1 is composed of 14 different subunits. Subunits NuoB, C, D, E, F, and G constitute the peripheral sector of the complex. [4Fe-4S] cluster is required as a cofactor.

It is found in the cell inner membrane. It carries out the reaction a quinone + NADH + 5 H(+)(in) = a quinol + NAD(+) + 4 H(+)(out). In terms of biological role, NDH-1 shuttles electrons from NADH, via FMN and iron-sulfur (Fe-S) centers, to quinones in the respiratory chain. Couples the redox reaction to proton translocation (for every two electrons transferred, four hydrogen ions are translocated across the cytoplasmic membrane), and thus conserves the redox energy in a proton gradient. This chain is NADH-quinone oxidoreductase subunit B 2, found in Nitrosospira multiformis (strain ATCC 25196 / NCIMB 11849 / C 71).